A 309-amino-acid polypeptide reads, in one-letter code: Zinc transporter ZIPB (309 aa).

The Periplasmic portion of the chain corresponds to 1 to 22 (MNQPSSLAADLRGAWHAQAQSH). The helical transmembrane segment at 23–50 (PLITLGLAASAAGVVLLLVAGIVNALTG) threads the bilayer. Over 51 to 55 (ENRVH) the chain is Extracellular. Residues 56–81 (VGYAVLGGAAGFAATALGALMALGLR) traverse the membrane as a helical segment. Topologically, residues 82–83 (AI) are periplasmic. A helical transmembrane segment spans residues 84–119 (SARTQDAMLGFAAGMMLAASAFSLILPGLDAAGTIV). Aspartate 89 is a binding site for Zn(2+). Methionine 99 is a binding site for Cd(2+). Residues 120 to 121 (GP) lie on the Extracellular side of the membrane. Residues 122–145 (GPAAAAVVALGLGLGVLLMLGLDY) form a helical membrane-spanning segment. Zn(2+) is bound at residue aspartate 144. Aspartate 144 serves as a coordination point for Cd(2+). The Periplasmic portion of the chain corresponds to 146–165 (FTPHEHERTGHQGPEAARVN). The chain crosses the membrane as a helical span at residues 166–190 (RVWLFVLTIILHNLPEGMAIGVSFA). Histidine 177 is a binding site for Zn(2+). 3 residues coordinate Cd(2+): histidine 177, asparagine 178, and glutamate 181. Glutamate 181 contributes to the Zn(2+) binding site. Residues 191–192 (TG) lie on the Extracellular side of the membrane. Residues 193–222 (DLRIGLPLTSAIAIQDVPEGLAVALALRAV) form a helical membrane-spanning segment. Glutamine 207 contacts Zn(2+). 3 residues coordinate Cd(2+): glutamine 207, aspartate 208, and glutamate 211. Residue glutamate 211 participates in Zn(2+) binding. The Periplasmic portion of the chain corresponds to 223–224 (GL). The helical transmembrane segment at 225 to 251 (PIGRAVLVAVASGLMEPLGALVGVGIS) threads the bilayer. A Cd(2+)-binding site is contributed by glutamate 240. Over 252–255 (SGFA) the chain is Extracellular. A helical transmembrane segment spans residues 256 to 275 (LAYPISMGLAAGAMIFVVSH). Positions 275, 276, and 286 each coordinate Zn(2+). Residue histidine 275 coordinates Cd(2+). At 276–287 (EVIPETHRNGHE) the chain is on the periplasmic side. A helical membrane pass occupies residues 288–308 (TTATVGLMAGFALMMFLDTAL). A topological domain (extracellular) is located at residue glycine 309.

The protein belongs to the ZIP transporter (TC 2.A.5) family. Homodimer. Also exists as a monomer.

It is found in the cell inner membrane. It carries out the reaction Zn(2+)(in) = Zn(2+)(out). It catalyses the reaction Cd(2+)(in) = Cd(2+)(out). Its function is as follows. Selective electrodiffusional channel that mediates the uptake of Zn(2+). Exploits in vivo zinc concentration gradients (maintained by cellular zinc homeostasis) to passively move zinc ions into the cytoplasm. ZIPB-mediated zinc flux is dependent upon pH, but independent of the proton motive force. Is also able to import Cd(2+), but is not permeable to Co(2+), Cu(2+), Fe(2+), Mn(2+) and Ni(2+). The sequence is that of Zinc transporter ZIPB from Bordetella bronchiseptica (strain ATCC BAA-588 / NCTC 13252 / RB50) (Alcaligenes bronchisepticus).